Here is a 473-residue protein sequence, read N- to C-terminus: LETM1 domain-containing protein mdm28, mitochondrial (473 aa).

The transit peptide at 1–73 (MLRNRLFKTP…FYNIGSSRLY (73 aa)) directs the protein to the mitochondrion. At 74–161 (STETPTPSKV…LTRTLKDIGR (88 aa)) the chain is on the mitochondrial intermembrane side. A helical transmembrane segment spans residues 162 to 182 (LVPFSVFVVVPFAELLLPIAV). The Mitochondrial matrix portion of the chain corresponds to 183–473 (KLFPNLLPST…ESNIPKNERK (291 aa)). Positions 205 to 398 (QLRKTRNEVS…LQDTLASIPD (194 aa)) constitute a Letm1 RBD domain. The segment at 430-473 (EEEAEHVAEHPDLAKKQTEENKATSKPAVSAKSPESNIPKNERK) is disordered. Over residues 434 to 452 (EHVAEHPDLAKKQTEENKA) the composition is skewed to basic and acidic residues. Polar residues predominate over residues 462-473 (SPESNIPKNERK).

Its subcellular location is the mitochondrion inner membrane. Involved in mitochondrial potassium homeostasis through the mitochondrial K(+)/H(+) exchange regulation. The chain is LETM1 domain-containing protein mdm28, mitochondrial (mdm28) from Schizosaccharomyces pombe (strain 972 / ATCC 24843) (Fission yeast).